Here is a 1183-residue protein sequence, read N- to C-terminus: Chromosome partition protein Smc (1183 aa).

Residue Pro-32–Asn-39 participates in ATP binding. Positions Glu-162–Glu-483 form a coiled coil. In terms of domain architecture, SMC hinge spans Ser-519–Ile-632. Residues Ile-666 to Glu-1019 are a coiled coil.

This sequence belongs to the SMC family. Homodimer.

It localises to the cytoplasm. Functionally, required for chromosome condensation and partitioning. This Fusobacterium nucleatum subsp. nucleatum (strain ATCC 25586 / DSM 15643 / BCRC 10681 / CIP 101130 / JCM 8532 / KCTC 2640 / LMG 13131 / VPI 4355) protein is Chromosome partition protein Smc.